The primary structure comprises 85 residues: ELKYQLLKKYSGYLSSLRQEFSKKKKKGKLPKEARQKLLHWWELHYKWPYPSETEKIALAEATGLDQKQINNWFINQRKRHWKPS.

The ELK domain occupies 1–21; that stretch reads ELKYQLLKKYSGYLSSLRQEF. The homeobox; TALE-type DNA-binding region spans 22–85; that stretch reads SKKKKKGKLP…NQRKRHWKPS (64 aa).

It belongs to the TALE/KNOX homeobox family. In terms of tissue distribution, strongly expressed in ear inflorescence primordia and shoot meristem. Weakly expressed in embryos. Absent from leaves.

It localises to the nucleus. Probably binds to the DNA sequence 5'-TGAC-3'. In Zea mays (Maize), this protein is Homeobox protein knotted-1-like 4 (KNOX4).